Here is a 957-residue protein sequence, read N- to C-terminus: Glycine dehydrogenase (decarboxylating) (957 aa).

Lys708 carries the post-translational modification N6-(pyridoxal phosphate)lysine.

It belongs to the GcvP family. The glycine cleavage system is composed of four proteins: P, T, L and H. Pyridoxal 5'-phosphate serves as cofactor.

It catalyses the reaction N(6)-[(R)-lipoyl]-L-lysyl-[glycine-cleavage complex H protein] + glycine + H(+) = N(6)-[(R)-S(8)-aminomethyldihydrolipoyl]-L-lysyl-[glycine-cleavage complex H protein] + CO2. Functionally, the glycine cleavage system catalyzes the degradation of glycine. The P protein binds the alpha-amino group of glycine through its pyridoxal phosphate cofactor; CO(2) is released and the remaining methylamine moiety is then transferred to the lipoamide cofactor of the H protein. This is Glycine dehydrogenase (decarboxylating) from Escherichia fergusonii (strain ATCC 35469 / DSM 13698 / CCUG 18766 / IAM 14443 / JCM 21226 / LMG 7866 / NBRC 102419 / NCTC 12128 / CDC 0568-73).